Here is a 490-residue protein sequence, read N- to C-terminus: Serine hydroxymethyltransferase (490 aa).

Residues Leu179 and 183–185 (GHL) each bind (6S)-5,6,7,8-tetrahydrofolate. N6-(pyridoxal phosphate)lysine is present on Lys291. Lys362 participates in a covalent cross-link: Isoglutamyl lysine isopeptide (Lys-Gln) (interchain with Q-Cter in protein Pup).

The protein belongs to the SHMT family. In terms of assembly, homodimer. Pyridoxal 5'-phosphate serves as cofactor.

It is found in the cytoplasm. It carries out the reaction (6R)-5,10-methylene-5,6,7,8-tetrahydrofolate + glycine + H2O = (6S)-5,6,7,8-tetrahydrofolate + L-serine. It functions in the pathway one-carbon metabolism; tetrahydrofolate interconversion. It participates in amino-acid biosynthesis; glycine biosynthesis; glycine from L-serine: step 1/1. Functionally, catalyzes the reversible interconversion of serine and glycine with tetrahydrofolate (THF) serving as the one-carbon carrier. This reaction serves as the major source of one-carbon groups required for the biosynthesis of purines, thymidylate, methionine, and other important biomolecules. Also exhibits THF-independent aldolase activity toward beta-hydroxyamino acids, producing glycine and aldehydes, via a retro-aldol mechanism. This Mycolicibacterium smegmatis (strain ATCC 700084 / mc(2)155) (Mycobacterium smegmatis) protein is Serine hydroxymethyltransferase.